Here is a 399-residue protein sequence, read N- to C-terminus: S-adenosylmethionine synthase (399 aa).

His-17 provides a ligand contact to ATP. Residue Asp-19 participates in Mg(2+) binding. K(+) is bound at residue Glu-45. Residues Glu-58 and Gln-101 each coordinate L-methionine. The flexible loop stretch occupies residues 101–111; that stretch reads QSPDIAQGVDE. Residues 177-179, 244-245, Asp-253, 259-260, Ala-276, and Lys-280 each bind ATP; these read DAK, RF, and RK. Asp-253 is a binding site for L-methionine. Lys-284 contributes to the L-methionine binding site.

Belongs to the AdoMet synthase family. As to quaternary structure, homotetramer; dimer of dimers. Mg(2+) serves as cofactor. K(+) is required as a cofactor.

It is found in the cytoplasm. The catalysed reaction is L-methionine + ATP + H2O = S-adenosyl-L-methionine + phosphate + diphosphate. It functions in the pathway amino-acid biosynthesis; S-adenosyl-L-methionine biosynthesis; S-adenosyl-L-methionine from L-methionine: step 1/1. Functionally, catalyzes the formation of S-adenosylmethionine (AdoMet) from methionine and ATP. The overall synthetic reaction is composed of two sequential steps, AdoMet formation and the subsequent tripolyphosphate hydrolysis which occurs prior to release of AdoMet from the enzyme. This chain is S-adenosylmethionine synthase, found in Listeria monocytogenes serovar 1/2a (strain ATCC BAA-679 / EGD-e).